The following is a 293-amino-acid chain: ELMO domain-containing protein 2 (293 aa).

In terms of domain architecture, ELMO spans 126-282 (QHEELLMKLW…KFHEKIKGLL (157 aa)).

Alveolar cells (morphologically type II cells) and alveolar macrophages (at protein level). Expressed in brain, colon, heart, kidney, liver, lung, muscle, placenta, small intestine, spleen, stomach and testis. In lung it is expressed in alveolar macrophages and alveolar walls.

Its function is as follows. Acts as a GTPase-activating protein (GAP) toward guanine nucleotide exchange factors like ARL2, ARL3, ARF1 and ARF6, but not for GTPases outside the Arf family. Regulates IFN-related antiviral responses. The polypeptide is ELMO domain-containing protein 2 (ELMOD2) (Homo sapiens (Human)).